A 103-amino-acid chain; its full sequence is Large ribosomal subunit protein uL24 (103 aa).

Belongs to the universal ribosomal protein uL24 family. In terms of assembly, part of the 50S ribosomal subunit.

Its function is as follows. One of two assembly initiator proteins, it binds directly to the 5'-end of the 23S rRNA, where it nucleates assembly of the 50S subunit. Functionally, one of the proteins that surrounds the polypeptide exit tunnel on the outside of the subunit. This chain is Large ribosomal subunit protein uL24, found in Dehalococcoides mccartyi (strain ATCC BAA-2100 / JCM 16839 / KCTC 5957 / BAV1).